Here is a 635-residue protein sequence, read N- to C-terminus: MVSIRLPDGSVRQYEHPVTVAEVAASIGPGLAKAALGGKLDGELVDTSTVIDRDASLAIVTDKDADGLDIIRHSTAHLLAYAVKELYPDAQVTIGPVIDNGFYYDFSYNRPFTPEDLEKIEKRMQELAKKDEPVTRRVVSRDEAAGYFRSIGEKYKAEIIESIPQSDEIKLYSHGGFTDLCRGPHVPSTGKLKVFKLMKVAGAYWRGDSKNEQLQRIYGTAWTKKEDQDQYLHMLEEAEKRDHRKLGKQLDLFHMQEESPGMVFWHPKGWALWQQVEQYMRRRVNEAGYLEIKTPMIMDRSLWEASGHWQNYRENMFTTESEKRDYAIKPMNCPGHVQVFKHGLRSYRDLPLRYAEFGSCHRNEASGALHGLMRVRGFVQDDAHIFCTEDQFISESIAFNTLAMSVYKDFGFDHIDIKLSLRPDQRAGTDETWARAEQGLRDALTACGLTWEELPGEGAFYGPKIEYHIKDALGRSWQCGTLQLDMVLPERLGAEYVAEDNSRRRPVMLHRAIVGSMERFLGILIEHHAGAMPVWLAPYQAIVLNIAESQAEYAQSLTQTLQKQGVRVAADLRNEKISYKIREHTLEKVPYLLVVGDKERDAQTVAVRARGGVDLGVMPVEAFVERLQEDLRSFK.

One can recognise a TGS domain in the interval 1 to 61 (MVSIRLPDGS…DRDASLAIVT (61 aa)). The tract at residues 242-533 (DHRKLGKQLD…LIEHHAGAMP (292 aa)) is catalytic. Zn(2+) contacts are provided by Cys333, His384, and His510.

Belongs to the class-II aminoacyl-tRNA synthetase family. In terms of assembly, homodimer. Requires Zn(2+) as cofactor.

Its subcellular location is the cytoplasm. The enzyme catalyses tRNA(Thr) + L-threonine + ATP = L-threonyl-tRNA(Thr) + AMP + diphosphate + H(+). Catalyzes the attachment of threonine to tRNA(Thr) in a two-step reaction: L-threonine is first activated by ATP to form Thr-AMP and then transferred to the acceptor end of tRNA(Thr). Also edits incorrectly charged L-seryl-tRNA(Thr). This is Threonine--tRNA ligase from Burkholderia orbicola (strain MC0-3).